Reading from the N-terminus, the 366-residue chain is Probable neutral protease 2 homolog B (366 aa).

The N-terminal stretch at 1–19 (MQVIVALAALSSLAAPALG) is a signal peptide. The propeptide occupies 20–189 (FSIPRGVPVS…RGPRSRITKR (170 aa)). Intrachain disulfides connect Cys197–Cys267, Cys274–Cys292, and Cys306–Cys366. His317 is a binding site for Zn(2+). Glu318 is an active-site residue. Residues His321 and Asp332 each coordinate Zn(2+).

This sequence belongs to the peptidase M35 family. The cofactor is Zn(2+).

Its subcellular location is the secreted. The enzyme catalyses Preferential cleavage of bonds with hydrophobic residues in P1'. Also 3-Asn-|-Gln-4 and 8-Gly-|-Ser-9 bonds in insulin B chain.. Functionally, probable secreted metalloprotease that shows high activities on basic nuclear substrates such as histone and protamine. May be involved in virulence. This Trichophyton rubrum (Athlete's foot fungus) protein is Probable neutral protease 2 homolog B (NpII-B).